We begin with the raw amino-acid sequence, 1894 residues long: Adenylate kinase 9 (1894 aa).

The tract at residues 32-286 (TCFIIFGKPG…LFMTVIERLK (255 aa)) is adenylate kinase 1. An ATP-binding site is contributed by 41–46 (GAGKTT). An NMP 1 region spans residues 61 to 90 (EALSVLEEHIAAEKETGAMLQSLLVSGHSI). 117 to 120 (EMPS) lines the AMP pocket. The LID 1 stretch occupies residues 161 to 206 (GQRQHSTTGYVYTREQWDPEIIESRRRKKRDFPKEGKSEEEEEEEE). Residues 188–211 (KKRDFPKEGKSEEEEEEEEQEEEE) are disordered. Residues 198–211 (SEEEEEEEEQEEEE) show a composition bias toward acidic residues. R230 contributes to the AMP binding site. Residues 451-478 (IKVVQQRLLNEKQAKQQEERTLKELQVQ) are a coiled coil. The disordered stretch occupies residues 492-533 (SEELPSLENTGSKLSSLEIGQEDKSKSETTITGDQVKDVSTE). The stretch at 651–691 (LERLQEEAQAKKREEEEIRKVKEEELRLEEEKQRLMELATK) forms a coiled coil. 2 disordered regions span residues 710-789 (PYPD…LGSE) and 876-911 (EEEAEDYQAETEIDEEQEEEEEEEEEGEEKIKEKRR). A compositionally biased stretch (acidic residues) spans 715–736 (PDNEAEEEVEDSEIHEESEAQE). Composition is skewed to basic and acidic residues over residues 757 to 768 (EGDHEPEAEFKP) and 777 to 789 (ETEKDPKEGLGSE). Residues 876-903 (EEEAEDYQAETEIDEEQEEEEEEEEEGE) show a composition bias toward acidic residues. Residues 976–1187 (LRICLLGPHG…VAKRRAELIL (212 aa)) form an adenylate kinase 2 region. 985–990 (GSGKTV) lines the ATP pocket. Residues 1005 to 1036 (QFDEFLQEKMLLKAERKFGPEFEDDSEEEQLV) are NMP 2. AMP contacts are provided by residues 1034-1036 (QLV) and 1063-1066 (VQLT). The interval 1108-1128 (DGFPRHPEEAQFLGERGFFPD) is LID 2. Residues 1223 to 1241 (EFPKDEEEMSEEDEEQEAD) show a composition bias toward acidic residues. The segment at 1223–1243 (EFPKDEEEMSEEDEEQEADAT) is disordered. Residues 1395–1584 (VRIMIVGPPK…VWNEVLKDIQ (190 aa)) are adenylate kinase 3. 1404 to 1409 (KSGKTT) lines the ATP pocket. The segment at 1424 to 1455 (SVGDALRGMLNNHPDSELSLMLNWHLHKGKTV) is NMP 3. AMP-binding positions include R1430, 1482-1485 (GYPV), and Q1489. The tract at residues 1519–1533 (LEKKTEQSMSYPLHN) is LID 3.

The protein belongs to the adenylate kinase family. In terms of tissue distribution, highly expressed in the testis.

It is found in the cytoplasm. The protein resides in the nucleus. The protein localises to the cell projection. Its subcellular location is the cilium. It localises to the flagellum. It carries out the reaction a ribonucleoside 5'-phosphate + ATP = a ribonucleoside 5'-diphosphate + ADP. It catalyses the reaction AMP + ATP = 2 ADP. The catalysed reaction is GTP + AMP = GDP + ADP. The enzyme catalyses CMP + ATP = CDP + ADP. It carries out the reaction GTP + CMP = CDP + GDP. It catalyses the reaction dAMP + ATP = dADP + ADP. The catalysed reaction is dCMP + ATP = dCDP + ADP. The enzyme catalyses a ribonucleoside 5'-diphosphate + ATP = a ribonucleoside 5'-triphosphate + ADP. It carries out the reaction CDP + ATP = CTP + ADP. It catalyses the reaction CDP + GTP = CTP + GDP. The catalysed reaction is GDP + ATP = GTP + ADP. The enzyme catalyses UDP + ATP = UTP + ADP. It carries out the reaction GTP + UDP = UTP + GDP. It catalyses the reaction dTDP + GTP = dTTP + GDP. The catalysed reaction is dCDP + ATP = dCTP + ADP. The enzyme catalyses dCDP + GTP = dCTP + GDP. It carries out the reaction dGDP + ATP = dGTP + ADP. It catalyses the reaction dTDP + ATP = dTTP + ADP. The catalysed reaction is dADP + GTP = dATP + GDP. Its function is as follows. Broad-specificity nucleoside phosphate kinase involved in cellular nucleotide homeostasis by catalyzing nucleoside-phosphate interconversions. Similar to other adenylate kinases, preferentially catalyzes the phosphorylation of the nucleoside monophosphate AMP with ATP as phosphate donor to produce ADP. In vitro, can also catalyze the phosphorylation of CMP, dAMP and dCMP and use GTP as an alternate phosphate donor. Moreover, exhibits a diphosphate kinase activity, producing ATP, CTP, GTP, UTP, TTP, dATP, dCTP and dGTP from the corresponding diphosphate substrates with either ATP or GTP as phosphate donors. For this activity shows the following substrate preference CDP &gt; UDP &gt; ADP &gt; TDP. The chain is Adenylate kinase 9 from Mus musculus (Mouse).